Here is a 208-residue protein sequence, read N- to C-terminus: Golgi apparatus membrane protein TVP23 homolog B (208 aa).

M1 carries the N-acetylmethionine modification. A compositionally biased stretch (acidic residues) spans 1 to 21 (MLQQDSNDDTEDVSLFDAEEE). Positions 1-27 (MLQQDSNDDTEDVSLFDAEEETTNRPK) are disordered. Helical transmembrane passes span 34–53 (PVAS…VYLL), 54–72 (CELF…ILLL), 126–146 (IFWL…FSAL), and 152–172 (KWLA…YGYI).

Belongs to the TVP23 family.

It localises to the membrane. This Bos taurus (Bovine) protein is Golgi apparatus membrane protein TVP23 homolog B (TVP23B).